We begin with the raw amino-acid sequence, 183 residues long: MATPRPCADGPCCSHPSAVLGVQQTLEEMDFERGIWSAALNGDLGRVKHLIQKAEDPSQPDSAGYTALHYASRNGHYAVCQFLLESGAKCDAQTHGGATALHRASYCGHTEIARLLLSHGSNPRVVDDDGMTSLHKAAERGHGDICSLLLQHSPALKAIRDRKARLACDLLPCNSDLRDLLSS.

ANK repeat units follow at residues aspartate 30–glutamine 59, alanine 63–alanine 92, glycine 96–valine 125, and aspartate 129–alanine 158. Serine 153 is modified (phosphoserine).

Belongs to the ANKRD39 family.

The polypeptide is Ankyrin repeat domain-containing protein 39 (ANKRD39) (Homo sapiens (Human)).